A 488-amino-acid polypeptide reads, in one-letter code: Protein nucleotidyltransferase YdiU (488 aa).

G91, G93, R94, K114, D126, G127, R177, and R184 together coordinate ATP. Positions 108 to 127 are disordered; the sequence is RFDIQLKGSGPTPYSRRGDG. D253 acts as the Proton acceptor in catalysis. Mg(2+) contacts are provided by N254 and D263. Position 263 (D263) interacts with ATP.

Belongs to the SELO family. It depends on Mg(2+) as a cofactor. Mn(2+) serves as cofactor.

The enzyme catalyses L-seryl-[protein] + ATP = 3-O-(5'-adenylyl)-L-seryl-[protein] + diphosphate. The catalysed reaction is L-threonyl-[protein] + ATP = 3-O-(5'-adenylyl)-L-threonyl-[protein] + diphosphate. It carries out the reaction L-tyrosyl-[protein] + ATP = O-(5'-adenylyl)-L-tyrosyl-[protein] + diphosphate. It catalyses the reaction L-histidyl-[protein] + UTP = N(tele)-(5'-uridylyl)-L-histidyl-[protein] + diphosphate. The enzyme catalyses L-seryl-[protein] + UTP = O-(5'-uridylyl)-L-seryl-[protein] + diphosphate. The catalysed reaction is L-tyrosyl-[protein] + UTP = O-(5'-uridylyl)-L-tyrosyl-[protein] + diphosphate. Nucleotidyltransferase involved in the post-translational modification of proteins. It can catalyze the addition of adenosine monophosphate (AMP) or uridine monophosphate (UMP) to a protein, resulting in modifications known as AMPylation and UMPylation. In Bacillus cereus (strain AH820), this protein is Protein nucleotidyltransferase YdiU.